A 319-amino-acid chain; its full sequence is ATP-dependent 6-phosphofructokinase (319 aa).

Gly-11 is a binding site for ATP. 21–25 (RAAVR) is an ADP binding site. Residues 72–73 (RS) and 102–105 (GDGS) each bind ATP. Asp-103 is a Mg(2+) binding site. A substrate-binding site is contributed by 125–127 (TID). Residue Asp-127 is the Proton acceptor of the active site. Residue Arg-154 coordinates ADP. Residues Arg-162 and 169–171 (MGR) contribute to the substrate site. Residues 185–187 (GAE), Arg-211, and 213–215 (KKH) contribute to the ADP site. Residues Glu-222, Arg-243, and 249-252 (HIQR) each bind substrate.

This sequence belongs to the phosphofructokinase type A (PFKA) family. ATP-dependent PFK group I subfamily. Prokaryotic clade 'B1' sub-subfamily. As to quaternary structure, homotetramer. Mg(2+) is required as a cofactor.

It localises to the cytoplasm. The enzyme catalyses beta-D-fructose 6-phosphate + ATP = beta-D-fructose 1,6-bisphosphate + ADP + H(+). It functions in the pathway carbohydrate degradation; glycolysis; D-glyceraldehyde 3-phosphate and glycerone phosphate from D-glucose: step 3/4. Allosterically activated by ADP and other diphosphonucleosides, and allosterically inhibited by phosphoenolpyruvate. In terms of biological role, catalyzes the phosphorylation of D-fructose 6-phosphate to fructose 1,6-bisphosphate by ATP, the first committing step of glycolysis. This Brevibacillus brevis (strain 47 / JCM 6285 / NBRC 100599) protein is ATP-dependent 6-phosphofructokinase.